Here is a 200-residue protein sequence, read N- to C-terminus: Peroxiredoxin (200 aa).

Residues 6–166 (ARIGHLAPGF…ILRLVQAFQF (161 aa)) form the Thioredoxin domain. C52 (cysteine sulfenic acid (-SOH) intermediate) is an active-site residue.

The protein belongs to the peroxiredoxin family. AhpC/Prx1 subfamily. Homodimer; disulfide-linked, upon oxidation.

It carries out the reaction a hydroperoxide + [thioredoxin]-dithiol = an alcohol + [thioredoxin]-disulfide + H2O. In terms of biological role, thiol-specific peroxidase that catalyzes the reduction of hydrogen peroxide and organic hydroperoxides to water and alcohols, respectively. Plays a role in cell protection against oxidative stress by detoxifying peroxides and as sensor of hydrogen peroxide-mediated signaling events. This Oncorhynchus mykiss (Rainbow trout) protein is Peroxiredoxin.